We begin with the raw amino-acid sequence, 311 residues long: Mycothiol acetyltransferase (311 aa).

Glu35 provides a ligand contact to 1D-myo-inositol 2-(L-cysteinylamino)-2-deoxy-alpha-D-glucopyranoside. Residue Leu79–Val81 coordinates acetyl-CoA. The N-acetyltransferase domain occupies Val155–Asp311. The 1D-myo-inositol 2-(L-cysteinylamino)-2-deoxy-alpha-D-glucopyranoside site is built by Glu180, Lys225, and Glu235. Residues Leu239 to Val241 and Gln246 to Gln252 each bind acetyl-CoA. Position 278 (Tyr278) interacts with 1D-myo-inositol 2-(L-cysteinylamino)-2-deoxy-alpha-D-glucopyranoside. Asn283–Arg288 contacts acetyl-CoA.

Belongs to the acetyltransferase family. MshD subfamily. In terms of assembly, monomer.

The enzyme catalyses 1D-myo-inositol 2-(L-cysteinylamino)-2-deoxy-alpha-D-glucopyranoside + acetyl-CoA = mycothiol + CoA + H(+). In terms of biological role, catalyzes the transfer of acetyl from acetyl-CoA to desacetylmycothiol (Cys-GlcN-Ins) to form mycothiol. The sequence is that of Mycothiol acetyltransferase from Mycobacterium leprae (strain Br4923).